The following is a 225-amino-acid chain: MDYRQLHRWDLPPEEAIKVQNELRKKIKLTPYEGEPEYVAGVDLSFPGKEEGLAVIVVLEYPSFKILEVVSERGEITFPYIPGLLAFREGPLFLKAWEKLRTKPDVVVFDGQGLAHPRKLGIASHMGLFIEIPTIGVAKSRLYGTFKMPEDKRCSWSYLYDGEEIIGCVIRTKEGSAPIFVSPGHLMDVESSKRLIKAFTLPGRRIPEPTRLAHIYTQRLKKGLF.

Asp-43 and Asp-110 together coordinate Mg(2+). Interaction with target DNA regions lie at residues Lys-139–Arg-141 and His-214–Lys-221.

Belongs to the endonuclease V family. The cofactor is Mg(2+).

The protein resides in the cytoplasm. It carries out the reaction Endonucleolytic cleavage at apurinic or apyrimidinic sites to products with a 5'-phosphate.. Functionally, DNA repair enzyme involved in the repair of deaminated bases. Selectively cleaves double-stranded DNA at the second phosphodiester bond 3' to a deoxyinosine leaving behind the intact lesion on the nicked DNA. In vitro, can also cleave single-stranded substrates with inosine, double-stranded DNA with apurinic sites, or DNA sites with uracil or a mismatched base. When present in molar excess, two protein molecules can bind to the same DNA substrate and effect cleavage of both strands (in vitro). The protein is Endonuclease V of Thermotoga maritima (strain ATCC 43589 / DSM 3109 / JCM 10099 / NBRC 100826 / MSB8).